We begin with the raw amino-acid sequence, 344 residues long: MKFLDLCKVYIRSGAGGGGCVSFRREKYIEYGGPDGGDGGTGGSVWAEAVDGLNTLIDFRYQQHFFAKNGQPGMGRQRTGKDGDDIVLRVPVGTEILDEDQETVICDLTEVGQRVQLARGGNGGFGNLHFKSSTNQAPRRSNPGQDGVERTLWLRLKLIADVGLLGLPNAGKSTFLAATSNARPKIADYPFTTLHPNLGVVGVDNTEFVVADIPGLIEGASEGRGLGDLFLGHIERCAVLLHLFDGTSETLIEDYHTIIGELEAYGVGLADKPRITVLNKIDALDEERRAMALKQLNNVCGGGVMAMSGVAGDGVTDVLRKLRGEISDEPLRHKPVEEKEPWRP.

The Obg domain occupies 1 to 159; that stretch reads MKFLDLCKVY…RTLWLRLKLI (159 aa). Residues 126–146 are disordered; sequence GNLHFKSSTNQAPRRSNPGQD. Residues 130 to 144 are compositionally biased toward polar residues; that stretch reads FKSSTNQAPRRSNPG. An OBG-type G domain is found at 160–327; the sequence is ADVGLLGLPN…VLRKLRGEIS (168 aa). GTP-binding positions include 166–173, 191–195, 212–215, 279–282, and 308–310; these read GLPNAGKS, FTTLH, DIPG, NKID, and SGV. Positions 173 and 193 each coordinate Mg(2+).

Belongs to the TRAFAC class OBG-HflX-like GTPase superfamily. OBG GTPase family. Monomer. Mg(2+) is required as a cofactor.

The protein localises to the cytoplasm. An essential GTPase which binds GTP, GDP and possibly (p)ppGpp with moderate affinity, with high nucleotide exchange rates and a fairly low GTP hydrolysis rate. Plays a role in control of the cell cycle, stress response, ribosome biogenesis and in those bacteria that undergo differentiation, in morphogenesis control. This chain is GTPase Obg, found in Roseobacter denitrificans (strain ATCC 33942 / OCh 114) (Erythrobacter sp. (strain OCh 114)).